Reading from the N-terminus, the 801-residue chain is Phenylalanine--tRNA ligase beta subunit (801 aa).

The tRNA-binding domain occupies 39–148 (AGSFTGVKVG…EDAVIGTDFR (110 aa)). The region spanning 401–476 (PKPNKVALRR…RIYGYDNIPN (76 aa)) is the B5 domain. Mg(2+) is bound by residues Asp-454, Asp-460, Glu-463, and Glu-464. The 94-residue stretch at 707-800 (SKFPSNRRDI…VSEKFGAALR (94 aa)) folds into the FDX-ACB domain.

The protein belongs to the phenylalanyl-tRNA synthetase beta subunit family. Type 1 subfamily. In terms of assembly, tetramer of two alpha and two beta subunits. Requires Mg(2+) as cofactor.

The protein localises to the cytoplasm. It catalyses the reaction tRNA(Phe) + L-phenylalanine + ATP = L-phenylalanyl-tRNA(Phe) + AMP + diphosphate + H(+). This Vibrio parahaemolyticus serotype O3:K6 (strain RIMD 2210633) protein is Phenylalanine--tRNA ligase beta subunit.